Here is a 130-residue protein sequence, read N- to C-terminus: Large ribosomal subunit protein bL19 (130 aa).

Belongs to the bacterial ribosomal protein bL19 family.

Functionally, this protein is located at the 30S-50S ribosomal subunit interface and may play a role in the structure and function of the aminoacyl-tRNA binding site. The protein is Large ribosomal subunit protein bL19 of Burkholderia ambifaria (strain ATCC BAA-244 / DSM 16087 / CCUG 44356 / LMG 19182 / AMMD) (Burkholderia cepacia (strain AMMD)).